Reading from the N-terminus, the 175-residue chain is Large ribosomal subunit protein uL10 (175 aa).

Belongs to the universal ribosomal protein uL10 family. As to quaternary structure, part of the ribosomal stalk of the 50S ribosomal subunit. The N-terminus interacts with L11 and the large rRNA to form the base of the stalk. The C-terminus forms an elongated spine to which L12 dimers bind in a sequential fashion forming a multimeric L10(L12)X complex.

Functionally, forms part of the ribosomal stalk, playing a central role in the interaction of the ribosome with GTP-bound translation factors. The protein is Large ribosomal subunit protein uL10 of Synechococcus elongatus (strain ATCC 33912 / PCC 7942 / FACHB-805) (Anacystis nidulans R2).